The primary structure comprises 343 residues: Probable dual-specificity RNA methyltransferase RlmN (343 aa).

The Proton acceptor role is filled by glutamate 91. Positions 97–326 (HPGRITACIS…AEIRQEKGSD (230 aa)) constitute a Radical SAM core domain. A disulfide bridge links cysteine 104 with cysteine 331. Residues cysteine 111, cysteine 115, and cysteine 118 each coordinate [4Fe-4S] cluster. Residues 158 to 159 (GE), serine 190, 213 to 215 (SLH), and asparagine 289 each bind S-adenosyl-L-methionine. The active-site S-methylcysteine intermediate is the cysteine 331.

It belongs to the radical SAM superfamily. RlmN family. The cofactor is [4Fe-4S] cluster.

It localises to the cytoplasm. The enzyme catalyses adenosine(2503) in 23S rRNA + 2 reduced [2Fe-2S]-[ferredoxin] + 2 S-adenosyl-L-methionine = 2-methyladenosine(2503) in 23S rRNA + 5'-deoxyadenosine + L-methionine + 2 oxidized [2Fe-2S]-[ferredoxin] + S-adenosyl-L-homocysteine. The catalysed reaction is adenosine(37) in tRNA + 2 reduced [2Fe-2S]-[ferredoxin] + 2 S-adenosyl-L-methionine = 2-methyladenosine(37) in tRNA + 5'-deoxyadenosine + L-methionine + 2 oxidized [2Fe-2S]-[ferredoxin] + S-adenosyl-L-homocysteine. Specifically methylates position 2 of adenine 2503 in 23S rRNA and position 2 of adenine 37 in tRNAs. The protein is Probable dual-specificity RNA methyltransferase RlmN of Thermotoga neapolitana (strain ATCC 49049 / DSM 4359 / NBRC 107923 / NS-E).